The chain runs to 109 residues: MSKRDVKAFLYDILESANDVIEFTKDIDYNEFINNKMIRYAVIRALEIIGEASRYINNDFREKFPNVPWKEMVGLRNILIHKYFGIDYILLWKIVKEDVPKIKKEVEIV.

Residues R76 and H81 contribute to the active site. Positions 76–83 (RNILIHKY) match the RX(4)HXY motif motif. Y83 carries the post-translational modification O-di-AMP-tyrosine.

The protein belongs to the HepT RNase toxin family. In terms of assembly, homodimer, probably forms a complex with cognate antitoxin MJ1379. Post-translationally, modified by cognate antitoxin MJ1379; probably at least 2 successive AMPylation events occur on Tyr-83.

Its function is as follows. Probable toxic component of a putative type VII toxin-antitoxin (TA) system, probably an RNase. Probably neutralized by cognate antitoxin MJ1379. Neutralization may be due to AMPylation by antitoxin MJ1379. This chain is Putative RNase MJ1380, found in Methanocaldococcus jannaschii (strain ATCC 43067 / DSM 2661 / JAL-1 / JCM 10045 / NBRC 100440) (Methanococcus jannaschii).